The primary structure comprises 581 residues: Ras-specific guanine nucleotide-releasing factor RalGPS1 (581 aa).

Residues 1–31 are disordered; that stretch reads MYRRNGLPASVSITSRNTQDSSSSESLDGRS. A Ras-GEF domain is found at 49 to 288; sequence TPEEFASQIT…YSLSLKIEPG (240 aa). The segment at 320–339 is disordered; sequence PDTSVVAHLPTPPPARHRKS. The PXXP signature appears at 329–332; the sequence is PTPP. Residues 455-567 form the PH domain; sequence SITIEGPLRR…WHRHLAEACR (113 aa).

The protein localises to the cytoplasm. The protein resides in the cell membrane. Its function is as follows. Guanine nucleotide exchange factor. May be involved in cytoskeletal organization. This Danio rerio (Zebrafish) protein is Ras-specific guanine nucleotide-releasing factor RalGPS1 (ralgps1).